The primary structure comprises 197 residues: Probable calcium-binding protein CML21 (197 aa).

The interval 1-33 (MLRPPPPSSVLTASAAAARPPASVVQPQRQAAH) is disordered. Low complexity predominate over residues 9-30 (SVLTASAAAARPPASVVQPQRQ). EF-hand domains lie at 37–72 (AETL…LGAR), 126–161 (EKEA…MGLP), and 164–197 (ACMA…AAGN). Asp50, Asp52, Asp54, Glu61, Asp139, Asp141, Asp143, Tyr145, Glu150, Asp177, Asp179, Asp181, Arg183, and Glu188 together coordinate Ca(2+).

Functionally, potential calcium sensor. The polypeptide is Probable calcium-binding protein CML21 (CML21) (Oryza sativa subsp. japonica (Rice)).